The chain runs to 468 residues: Adenosylhomocysteinase (468 aa).

The substrate site is built by Thr-57, Asp-132, and Glu-194. Residue 195-197 (TTT) coordinates NAD(+). The substrate site is built by Lys-224 and Asp-228. NAD(+) is bound by residues Asn-229, 258–263 (GFGDVG), Glu-281, Asn-316, 337–339 (IGH), and Asn-382.

The protein belongs to the adenosylhomocysteinase family. The cofactor is NAD(+).

The protein localises to the cytoplasm. It catalyses the reaction S-adenosyl-L-homocysteine + H2O = L-homocysteine + adenosine. It participates in amino-acid biosynthesis; L-homocysteine biosynthesis; L-homocysteine from S-adenosyl-L-homocysteine: step 1/1. Functionally, may play a key role in the regulation of the intracellular concentration of adenosylhomocysteine. This is Adenosylhomocysteinase from Methylorubrum extorquens (strain CM4 / NCIMB 13688) (Methylobacterium extorquens).